Reading from the N-terminus, the 101-residue chain is NAD(P)H-quinone oxidoreductase subunit 4L, chloroplastic (101 aa).

The next 3 helical transmembrane spans lie at 2–22 (MLEH…YGLI), 32–52 (MCLE…SDFF), and 61–81 (IFSI…PAIV).

This sequence belongs to the complex I subunit 4L family. As to quaternary structure, NDH is composed of at least 16 different subunits, 5 of which are encoded in the nucleus.

The protein localises to the plastid. It localises to the chloroplast thylakoid membrane. The catalysed reaction is a plastoquinone + NADH + (n+1) H(+)(in) = a plastoquinol + NAD(+) + n H(+)(out). It carries out the reaction a plastoquinone + NADPH + (n+1) H(+)(in) = a plastoquinol + NADP(+) + n H(+)(out). Functionally, NDH shuttles electrons from NAD(P)H:plastoquinone, via FMN and iron-sulfur (Fe-S) centers, to quinones in the photosynthetic chain and possibly in a chloroplast respiratory chain. The immediate electron acceptor for the enzyme in this species is believed to be plastoquinone. Couples the redox reaction to proton translocation, and thus conserves the redox energy in a proton gradient. The chain is NAD(P)H-quinone oxidoreductase subunit 4L, chloroplastic from Lotus japonicus (Lotus corniculatus var. japonicus).